A 133-amino-acid chain; its full sequence is Arsenate reductase 1 (133 aa).

Residues Cys10, Cys82, and Cys89 each act as nucleophile in the active site. 2 disulfide bridges follow: Cys10-Cys82 and Cys82-Cys89.

The protein belongs to the low molecular weight phosphotyrosine protein phosphatase family. Thioredoxin-coupled ArsC subfamily.

The protein localises to the cytoplasm. The catalysed reaction is arsenate + [thioredoxin]-dithiol + H(+) = arsenite + [thioredoxin]-disulfide + H2O. Catalyzes the reduction of arsenate [As(V)] to arsenite [As(III)]. This chain is Arsenate reductase 1, found in Staphylococcus haemolyticus (strain JCSC1435).